Here is a 44-residue protein sequence, read N- to C-terminus: Non-structural protein 7b (44 aa).

The helical transmembrane segment at 9 to 29 threads the bilayer; sequence FYLCFLAFLLFLVLIMLIIFW.

It localises to the host membrane. The sequence is that of Non-structural protein 7b from Bat coronavirus Rp3/2004 (BtCoV/Rp3/2004).